Here is a 175-residue protein sequence, read N- to C-terminus: Alkyl hydroperoxide reductase AhpD (175 aa).

C131 (proton donor) is an active-site residue. C131 and C134 are oxidised to a cystine. C134 functions as the Cysteine sulfenic acid (-SOH) intermediate in the catalytic mechanism.

It belongs to the AhpD family.

The catalysed reaction is N(6)-[(R)-dihydrolipoyl]-L-lysyl-[lipoyl-carrier protein] + a hydroperoxide = N(6)-[(R)-lipoyl]-L-lysyl-[lipoyl-carrier protein] + an alcohol + H2O. Its function is as follows. Antioxidant protein with alkyl hydroperoxidase activity. Required for the reduction of the AhpC active site cysteine residues and for the regeneration of the AhpC enzyme activity. This Brucella melitensis biotype 1 (strain ATCC 23456 / CCUG 17765 / NCTC 10094 / 16M) protein is Alkyl hydroperoxide reductase AhpD.